The following is a 1006-amino-acid chain: Retinoblastoma-related protein (1006 aa).

Residues 411–604 (TPVTTAMTTA…EKGSSMYNSL (194 aa)) form a domain A region. Residues 411 to 855 (TPVTTAMTTA…NEIFVPAVKP (445 aa)) form a pocket region. The segment at 605 to 724 (IVARPALSAE…PGGGGETCAE (120 aa)) is spacer. Residues 725–855 (TAVNVFFSKI…NEIFVPAVKP (131 aa)) are domain B. The segment covering 866-893 (AQSGSQVPEAKNNTNGVNPSSPRTSSFP) has biased composition (polar residues). The interval 866–898 (AQSGSQVPEAKNNTNGVNPSSPRTSSFPSLPDM) is disordered.

The protein belongs to the retinoblastoma protein (RB) family.

It localises to the nucleus. Regulator of biological processes that recruits a histone deacetylase to control gene transcription. May play a role in the entry into mitosis, negatively regulating the cell proliferation. Formation of stable complexes with geminiviridae replication-associated proteins may create a cellular environment which favors viral DNA replication. The polypeptide is Retinoblastoma-related protein (RB) (Scutellaria baicalensis (Baical skullcap)).